The following is an 867-amino-acid chain: MTTSATSGTGPADPAGPTENSMRRALKRARDGVALDASEAAVLLQARGAHLDALTASAARVRDAGLEAAGRPGVITYSKSVFVPLTRLCRDKCHYCTFVTVPGKLRRAGHGMFMSPDEVLDIARKGAALGCKEALITLGDKPEDRWPEAREWLDAHGYDDTIAYVRAVSIRILEETGLLPHLNPGVMTWTDFQRLKPVAPSMGMMLETTATRLWSEPGGPHHGSPDKEPAVRLRVLEDAGRSSVPFTSGILIGIGETYEERAESLFALRRVSRSYHGIQELIIQNFRAKPDTAMRGMPDAELDELVAAVAVARHIMGPSACLQAPPNLVDAEYERLIGAGIDDWGGVSPLTIDHVNPERPWPQIDELAATSRAAGFELRERLCVYPEFVRRGEPWLDPRLRPHVAALADPETGLAREDAVVEGHAWQEPDEAFTATGRTDLHATIDTEGRTSDRRDDFDEVYGDWGALREAAAPGMAPERIDTDVRAALATAADDPTKLTDDEALALLHAEGPALDALCGIADDVRRSVVGDDVTYIVTRNINFTNVCYTGCRFCAFAQRRTDADAYTLSLDQVADRAQQAWEVGAVEVCMQGGIHPDLPGTAYFDIARAVKERVPGMHVHAFSPMEVVNGATRTGLSIREWLTAAKEAGLDSVPGTAAEILDDEVRWILTKGKLPAATWIEVIETAHELGIRSSSTMMYGHVDQPRHWLGHLRTLAGIQRRTGGFTEFVTLPFIHTNAPVYLAGIARPGPTLRDNRAVTAMARLLLHPHIPNIQTSWVKLGTEGAAEMLRSGANDLGGTLMEETISRMAGSSYGSYKSVKDLIAVADAAGRPAKPRTTLYGPVPEERQRAARDSDGHLPELLPVLD.

Residues 1-22 (MTTSATSGTGPADPAGPTENSM) form a disordered region. 2 consecutive Radical SAM core domains span residues 75-325 (ITYS…LQAP) and 534-769 (VTYI…LLHP). A cofG-like region spans residues 76–407 (TYSKSVFVPL…PRLRPHVAAL (332 aa)). Cys-89, Cys-93, Cys-96, Cys-548, Cys-552, and Cys-555 together coordinate [4Fe-4S] cluster. The cofH-like stretch occupies residues 511–844 (EGPALDALCG…KPRTTLYGPV (334 aa)). Residues 835-867 (KPRTTLYGPVPEERQRAARDSDGHLPELLPVLD) form a disordered region. The segment covering 845-859 (PEERQRAARDSDGHL) has biased composition (basic and acidic residues).

This sequence in the N-terminal section; belongs to the radical SAM superfamily. CofG family. The protein in the C-terminal section; belongs to the radical SAM superfamily. CofH family. It depends on [4Fe-4S] cluster as a cofactor.

It carries out the reaction 5-amino-6-(D-ribitylamino)uracil + L-tyrosine + S-adenosyl-L-methionine = 5-amino-5-(4-hydroxybenzyl)-6-(D-ribitylimino)-5,6-dihydrouracil + 2-iminoacetate + 5'-deoxyadenosine + L-methionine + H(+). The catalysed reaction is 5-amino-5-(4-hydroxybenzyl)-6-(D-ribitylimino)-5,6-dihydrouracil + S-adenosyl-L-methionine = 7,8-didemethyl-8-hydroxy-5-deazariboflavin + 5'-deoxyadenosine + L-methionine + NH4(+) + H(+). The protein operates within cofactor biosynthesis; coenzyme F0 biosynthesis. Catalyzes the radical-mediated synthesis of 7,8-didemethyl-8-hydroxy-5-deazariboflavin (FO) from 5-amino-6-(D-ribitylamino)uracil and L-tyrosine. The sequence is that of FO synthase (fbiC) from Streptomyces coelicolor (strain ATCC BAA-471 / A3(2) / M145).